The sequence spans 614 residues: Elongation factor 4 (614 aa).

One can recognise a tr-type G domain in the interval 10–192 (ALIRNFCIIA…EIVARIPPPV (183 aa)). Residues 22-27 (DHGKST) and 139-142 (NKID) each bind GTP.

The protein belongs to the TRAFAC class translation factor GTPase superfamily. Classic translation factor GTPase family. LepA subfamily.

The protein localises to the cell membrane. It carries out the reaction GTP + H2O = GDP + phosphate + H(+). Functionally, required for accurate and efficient protein synthesis under certain stress conditions. May act as a fidelity factor of the translation reaction, by catalyzing a one-codon backward translocation of tRNAs on improperly translocated ribosomes. Back-translocation proceeds from a post-translocation (POST) complex to a pre-translocation (PRE) complex, thus giving elongation factor G a second chance to translocate the tRNAs correctly. Binds to ribosomes in a GTP-dependent manner. The sequence is that of Elongation factor 4 from Thermobifida fusca (strain YX).